Here is a 295-residue protein sequence, read N- to C-terminus: Pyridoxal 5'-phosphate synthase subunit PdxS (295 aa).

D25 serves as a coordination point for D-ribose 5-phosphate. K82 serves as the catalytic Schiff-base intermediate with D-ribose 5-phosphate. Position 154 (G154) interacts with D-ribose 5-phosphate. D-glyceraldehyde 3-phosphate is bound at residue R166. D-ribose 5-phosphate is bound by residues G215 and 236–237 (GS).

This sequence belongs to the PdxS/SNZ family. As to quaternary structure, in the presence of PdxT, forms a dodecamer of heterodimers.

It catalyses the reaction aldehydo-D-ribose 5-phosphate + D-glyceraldehyde 3-phosphate + L-glutamine = pyridoxal 5'-phosphate + L-glutamate + phosphate + 3 H2O + H(+). Its pathway is cofactor biosynthesis; pyridoxal 5'-phosphate biosynthesis. In terms of biological role, catalyzes the formation of pyridoxal 5'-phosphate from ribose 5-phosphate (RBP), glyceraldehyde 3-phosphate (G3P) and ammonia. The ammonia is provided by the PdxT subunit. Can also use ribulose 5-phosphate and dihydroxyacetone phosphate as substrates, resulting from enzyme-catalyzed isomerization of RBP and G3P, respectively. This chain is Pyridoxal 5'-phosphate synthase subunit PdxS, found in Staphylococcus carnosus (strain TM300).